The primary structure comprises 312 residues: Methionyl-tRNA formyltransferase (312 aa).

Ser-109 to Pro-112 is a binding site for (6S)-5,6,7,8-tetrahydrofolate.

The protein belongs to the Fmt family.

It catalyses the reaction L-methionyl-tRNA(fMet) + (6R)-10-formyltetrahydrofolate = N-formyl-L-methionyl-tRNA(fMet) + (6S)-5,6,7,8-tetrahydrofolate + H(+). Its function is as follows. Attaches a formyl group to the free amino group of methionyl-tRNA(fMet). The formyl group appears to play a dual role in the initiator identity of N-formylmethionyl-tRNA by promoting its recognition by IF2 and preventing the misappropriation of this tRNA by the elongation apparatus. The chain is Methionyl-tRNA formyltransferase from Listeria monocytogenes serotype 4b (strain CLIP80459).